The following is a 205-amino-acid chain: Auxin-responsive protein IAA8 (205 aa).

Residues 1–48 (MECMASTEESLPASSSMDSCSGELPTTTTTAPAQSTASSGCRPPATAA) form a disordered region. The span at 7-19 (TEESLPASSSMDS) shows a compositional bias: polar residues. A compositionally biased stretch (low complexity) spans 25 to 39 (PTTTTTAPAQSTASS). Residues 58–62 (LRLGL) carry the EAR-like (transcriptional repression) motif. A disordered region spans residues 71–98 (DGNNPSTPRSSLTTATVTADRGGGGGGH). Polar residues predominate over residues 73–87 (NNPSTPRSSLTTATV). Residues 103–199 (SLFVKVYMEG…KRLRIARADD (97 aa)) enclose the PB1 domain.

The protein belongs to the Aux/IAA family. As to quaternary structure, homodimers and heterodimers. Highly expressed in green shoots. Expressed in flowers.

Its subcellular location is the nucleus. Functionally, aux/IAA proteins are short-lived transcriptional factors that function as repressors of early auxin response genes at low auxin concentrations. The sequence is that of Auxin-responsive protein IAA8 (IAA8) from Oryza sativa subsp. japonica (Rice).